The primary structure comprises 203 residues: Thymidylate kinase (203 aa).

14–21 lines the ATP pocket; sequence GMDGIGKS.

It belongs to the thymidylate kinase family.

The enzyme catalyses dTMP + ATP = dTDP + ADP. Phosphorylation of dTMP to form dTDP in both de novo and salvage pathways of dTTP synthesis. This chain is Thymidylate kinase, found in Rickettsia typhi (strain ATCC VR-144 / Wilmington).